The sequence spans 77 residues: Small integral membrane protein 7 (77 aa).

The signal sequence occupies residues 1–17 (MIGDLLIFGTLLMNAGA). Over 18-55 (VLNFKLKKRETQSQGFGDDSGSSSTGENIREFLLSLRY) the chain is Extracellular. A helical transmembrane segment spans residues 56–76 (FRIFIALWNIFMMFCMIVLFG). Ser77 is a topological domain (cytoplasmic).

This sequence belongs to the SMIM7 family.

It is found in the membrane. The sequence is that of Small integral membrane protein 7 (smim7) from Danio rerio (Zebrafish).